We begin with the raw amino-acid sequence, 2415 residues long: Spectrin alpha chain (2415 aa).

Spectrin repeat units follow at residues Arg-48 to Gln-150, Leu-154 to Leu-254, His-258 to Glu-362, Leu-366 to Ile-464, Asp-471 to Asp-574, Arg-577 to Glu-679, Gln-683 to Leu-784, Gln-788 to Asp-890, and Gln-894 to Glu-963. One can recognise an SH3 domain in the interval Thr-970–Ala-1029. Ser-1032 and Ser-1034 each carry phosphoserine. Spectrin repeat units follow at residues Val-1079 to Leu-1177, His-1181 to Leu-1284, Tyr-1287 to Gln-1391, Asp-1394 to Gly-1496, Thr-1500 to Glu-1604, Gln-1608 to Glu-1710, Leu-1714 to Glu-1816, Tyr-1820 to Leu-1921, Tyr-1926 to Leu-2028, Leu-2040 to Leu-2141, and Leu-2154 to Gln-2252. 2 consecutive EF-hand domains span residues Asp-2265–Asp-2300 and Gln-2308–Glu-2343. Residues Asp-2278, Asp-2280, Ser-2282, Lys-2284, Glu-2289, Asp-2321, Asn-2323, Asp-2325, Tyr-2327, and Glu-2332 each coordinate Ca(2+).

It belongs to the spectrin family. Native spectrin molecule is a tetramer composed of two antiparallel heterodimers joined head to head so that each end of the native molecule includes the C-terminus of the alpha subunit and the N-terminus of the beta subunit. Interacts with calmodulin in a calcium-dependent manner, interacts with F-actin and also interacts with Lva. Interacts with Ten-m. A substantial pool of maternal protein in the egg undergoes dynamic changes in distribution early in embryogenesis. In gastrulated embryo, the highest level of protein is found in the respiratory tract cells and the lowest in parts of the forming gut.

It localises to the cytoplasm. The protein localises to the cytoskeleton. It is found in the golgi apparatus. Its subcellular location is the cell projection. The protein resides in the cilium. It localises to the flagellum. Spectrin is the major constituent of the cytoskeletal network underlying the erythrocyte plasma membrane. It associates with band 4.1 and actin to form the cytoskeletal superstructure of the erythrocyte plasma membrane. Essential for larval survival and development. Stabilizes cell to cell interactions that are critical for the maintenance of cell shape and subcellular organization within embryonic tissues. Lva and spectrin may form a Golgi-based scaffold that mediates interaction of Golgi bodies with microtubules and facilitates Golgi-derived membrane secretion required for the formation of furrows during cellularization. The sequence is that of Spectrin alpha chain (alpha-Spec) from Drosophila melanogaster (Fruit fly).